The sequence spans 418 residues: CinA-like protein (418 aa).

Belongs to the CinA family.

The polypeptide is CinA-like protein (Cytophaga hutchinsonii (strain ATCC 33406 / DSM 1761 / CIP 103989 / NBRC 15051 / NCIMB 9469 / D465)).